The chain runs to 20 residues: Small ribosomal subunit protein bS20 (20 aa).

Belongs to the bacterial ribosomal protein bS20 family.

Binds directly to 16S ribosomal RNA. The sequence is that of Small ribosomal subunit protein bS20 (rpsT) from Brevundimonas diminuta (Pseudomonas diminuta).